Here is a 500-residue protein sequence, read N- to C-terminus: Probable glycine dehydrogenase (decarboxylating) subunit 2 (500 aa).

Positions 1 to 25 (MLIFEHSRPGRRNYSQSPKAAEATD) are disordered. Lysine 263 carries the N6-(pyridoxal phosphate)lysine modification.

It belongs to the GcvP family. C-terminal subunit subfamily. In terms of assembly, the glycine cleavage system is composed of four proteins: P, T, L and H. In this organism, the P 'protein' is a heterodimer of two subunits. It depends on pyridoxal 5'-phosphate as a cofactor.

It carries out the reaction N(6)-[(R)-lipoyl]-L-lysyl-[glycine-cleavage complex H protein] + glycine + H(+) = N(6)-[(R)-S(8)-aminomethyldihydrolipoyl]-L-lysyl-[glycine-cleavage complex H protein] + CO2. Its function is as follows. The glycine cleavage system catalyzes the degradation of glycine. The P protein binds the alpha-amino group of glycine through its pyridoxal phosphate cofactor; CO(2) is released and the remaining methylamine moiety is then transferred to the lipoamide cofactor of the H protein. The sequence is that of Probable glycine dehydrogenase (decarboxylating) subunit 2 from Nitrosospira multiformis (strain ATCC 25196 / NCIMB 11849 / C 71).